A 566-amino-acid polypeptide reads, in one-letter code: Putative pentatricopeptide repeat-containing protein At1g28020 (566 aa).

PPR repeat units lie at residues 136 to 171 (GDSV…GLLL), 172 to 206 (RPVP…DVEA), 207 to 242 (DNVT…GIKL), 243 to 273 (EWHT…TEQL), 279 to 309 (LKSA…YKSK), 314 to 348 (DNNG…PLEF), 349 to 385 (DHRI…RMNK), 468 to 504 (DYSV…NVDP), and 505 to 540 (DLIT…GIKL).

Belongs to the PPR family. P subfamily.

This chain is Putative pentatricopeptide repeat-containing protein At1g28020, found in Arabidopsis thaliana (Mouse-ear cress).